Consider the following 310-residue polypeptide: Homoserine kinase (310 aa).

91–101 (PIGSGLGSSAC) serves as a coordination point for ATP.

The protein belongs to the GHMP kinase family. Homoserine kinase subfamily.

The protein resides in the cytoplasm. The catalysed reaction is L-homoserine + ATP = O-phospho-L-homoserine + ADP + H(+). The protein operates within amino-acid biosynthesis; L-threonine biosynthesis; L-threonine from L-aspartate: step 4/5. Functionally, catalyzes the ATP-dependent phosphorylation of L-homoserine to L-homoserine phosphate. The chain is Homoserine kinase from Sodalis glossinidius (strain morsitans).